The primary structure comprises 434 residues: Homogentisate 1,2-dioxygenase (434 aa).

His289 acts as the Proton acceptor in catalysis. Fe cation is bound by residues His332 and Glu338. Homogentisate-binding residues include Tyr347 and His368. His368 serves as a coordination point for Fe cation.

This sequence belongs to the homogentisate dioxygenase family. As to quaternary structure, hexamer; dimer of trimers. The cofactor is Fe cation.

It catalyses the reaction homogentisate + O2 = 4-maleylacetoacetate + H(+). It participates in amino-acid degradation; L-phenylalanine degradation; acetoacetate and fumarate from L-phenylalanine: step 4/6. Functionally, involved in the catabolism of homogentisate (2,5-dihydroxyphenylacetate or 2,5-OH-PhAc), a central intermediate in the degradation of phenylalanine and tyrosine. Catalyzes the oxidative ring cleavage of the aromatic ring of homogentisate to yield maleylacetoacetate. This chain is Homogentisate 1,2-dioxygenase, found in Pseudomonas fluorescens (strain ATCC BAA-477 / NRRL B-23932 / Pf-5).